We begin with the raw amino-acid sequence, 431 residues long: L-cysteine:1D-myo-inositol 2-amino-2-deoxy-alpha-D-glucopyranoside ligase (431 aa).

A Zn(2+)-binding site is contributed by Cys44. Residues 44–47 (CGIT), Thr59, and 82–84 (NVT) each bind L-cysteinyl-5'-AMP. Positions 46–56 (ITPYDATHLGH) match the 'HIGH' region motif. The 'ERGGDP' region motif lies at 187 to 192 (ERGGDP). Position 227 (Trp227) interacts with L-cysteinyl-5'-AMP. Cys231 is a binding site for Zn(2+). 249–251 (GND) lines the L-cysteinyl-5'-AMP pocket. His256 contacts Zn(2+). An L-cysteinyl-5'-AMP-binding site is contributed by Ile283. The 'KMSKS' region motif lies at 289-293 (KMSKS).

The protein belongs to the class-I aminoacyl-tRNA synthetase family. MshC subfamily. As to quaternary structure, monomer. Requires Zn(2+) as cofactor.

It carries out the reaction 1D-myo-inositol 2-amino-2-deoxy-alpha-D-glucopyranoside + L-cysteine + ATP = 1D-myo-inositol 2-(L-cysteinylamino)-2-deoxy-alpha-D-glucopyranoside + AMP + diphosphate + H(+). Its function is as follows. Catalyzes the ATP-dependent condensation of GlcN-Ins and L-cysteine to form L-Cys-GlcN-Ins. This Stackebrandtia nassauensis (strain DSM 44728 / CIP 108903 / NRRL B-16338 / NBRC 102104 / LLR-40K-21) protein is L-cysteine:1D-myo-inositol 2-amino-2-deoxy-alpha-D-glucopyranoside ligase.